The chain runs to 205 residues: MDIMKDKIRQALSELDILATEVQIDQWLDYLKLLEKWNKVYNMTAIKNIDEMLVKHLFDSLAVAKYIKGDSTVDVGTGGGLPGVVLAILYPQHQFTLVDSVGKKIMFLKNVKKSLSLNNINPINTRIENLEGNFDNIISRAFSSVDTFYELCKHFLTEHNQMLAMKGRDLEERNLESLPLNIEKYSIKVPFLNAERNLIVMRKKL.

S-adenosyl-L-methionine contacts are provided by residues G76, L81, I127 to E128, and R140.

It belongs to the methyltransferase superfamily. RNA methyltransferase RsmG family.

It is found in the cytoplasm. The catalysed reaction is guanosine(527) in 16S rRNA + S-adenosyl-L-methionine = N(7)-methylguanosine(527) in 16S rRNA + S-adenosyl-L-homocysteine. Specifically methylates the N7 position of guanine in position 527 of 16S rRNA. The chain is Ribosomal RNA small subunit methyltransferase G from Francisella tularensis subsp. novicida (strain U112).